The primary structure comprises 428 residues: Glutamate-1-semialdehyde 2,1-aminomutase (428 aa).

Lys265 carries the N6-(pyridoxal phosphate)lysine modification.

It belongs to the class-III pyridoxal-phosphate-dependent aminotransferase family. HemL subfamily. Homodimer. The cofactor is pyridoxal 5'-phosphate.

It is found in the cytoplasm. The enzyme catalyses (S)-4-amino-5-oxopentanoate = 5-aminolevulinate. The protein operates within porphyrin-containing compound metabolism; protoporphyrin-IX biosynthesis; 5-aminolevulinate from L-glutamyl-tRNA(Glu): step 2/2. The chain is Glutamate-1-semialdehyde 2,1-aminomutase from Shewanella sediminis (strain HAW-EB3).